Consider the following 504-residue polypeptide: Catalase (504 aa).

Active-site residues include H56 and N129. Y339 lines the heme pocket.

It belongs to the catalase family. Homodimer. Heme serves as cofactor.

The enzyme catalyses 2 H2O2 = O2 + 2 H2O. In terms of biological role, decomposes hydrogen peroxide into water and oxygen; serves to protect cells from the toxic effects of hydrogen peroxide. In Staphylococcus epidermidis, this protein is Catalase (katA).